We begin with the raw amino-acid sequence, 798 residues long: Translation initiation factor IF-2 (798 aa).

The disordered stretch occupies residues 40-207; sequence SEQETKLRQA…QQESAKPAVP (168 aa). Residues 57–186 show a composition bias toward low complexity; sequence NTQSKATNNQ…RNNFNNQNRN (130 aa). Over residues 187-196 the composition is skewed to basic residues; the sequence is RFNKKGKKGK. A tr-type G domain is found at 300-469; the sequence is TRPPVVTIMG…LLIAEVEDLK (170 aa). The G1 stretch occupies residues 309–316; it reads GHVDHGKT. Residue 309-316 coordinates GTP; that stretch reads GHVDHGKT. A G2 region spans residues 334–338; that stretch reads GITQH. Residues 355–358 are G3; that stretch reads DTPG. GTP-binding positions include 355–359 and 409–412; these read DTPGH and NKID. The G4 stretch occupies residues 409 to 412; that stretch reads NKID. A G5 region spans residues 445–447; the sequence is SAK.

The protein belongs to the TRAFAC class translation factor GTPase superfamily. Classic translation factor GTPase family. IF-2 subfamily.

It is found in the cytoplasm. In terms of biological role, one of the essential components for the initiation of protein synthesis. Protects formylmethionyl-tRNA from spontaneous hydrolysis and promotes its binding to the 30S ribosomal subunits. Also involved in the hydrolysis of GTP during the formation of the 70S ribosomal complex. The protein is Translation initiation factor IF-2 of Enterococcus faecalis (strain ATCC 700802 / V583).